The sequence spans 123 residues: Cyclic ether formation enzyme xenC (123 aa).

Positions 1-24 are cleaved as a signal peptide; it reads MSSLLLSDVLSYGIFGFSALCVQA. A run of 2 helical transmembrane segments spans residues 58 to 78 and 102 to 122; these read SALR…LWSP and LGES…AILV.

Belongs to the cyclic ether formation enzyme xenC family.

It localises to the membrane. It functions in the pathway mycotoxin biosynthesis. Cyclic ether formation enzyme; part of the gene cluster that mediates the biosynthesis of xenoacremones such as xenoacremone A, a compound that shows inhibitory activity toward the PI3K/AKT signaling pathway and which has the ability to induce apoptosis of A549 lung cancer cells. Within the pathway, cooperation of the hybrid PKS-NRPS xenE and the trans-acting enoyl reductase xenG is responsible for the formation of the reduced tyrosine-nonaketide derivative. The alpha/beta hydrolase xenA then accelerates intramolecular nucleophilic attack to give a pyrrolidone derivative. Subsequently, three enzymes, xenF, xenD, and xenC, coordinately participate in the conversion to xenoacremone B. XenF catalyzes sigmatropic rearrangement to form an A-ring, which leads to an unusual intermediate with a hexane ring, which is required for the formation of the tricarbocyclic product. Epoxidation catalyzed by xenD and the formation of the paracyclophane ether catalyzed by xenC initiate a spontaneous intramolecular Diels-Alder (IMDA) reaction to yield xenoacremone B. Spontaneous hydration of xenoacremone B leads to the formation of xenoacremone A, which undergoes subsequent methylation to afford xenoacremone C. This Xenoacremonium sinensis (Endophyte fungus) protein is Cyclic ether formation enzyme xenC.